Consider the following 115-residue polypeptide: Large ribosomal subunit protein uL18 (115 aa).

This sequence belongs to the universal ribosomal protein uL18 family. As to quaternary structure, part of the 50S ribosomal subunit; part of the 5S rRNA/L5/L18/L25 subcomplex. Contacts the 5S and 23S rRNAs.

This is one of the proteins that bind and probably mediate the attachment of the 5S RNA into the large ribosomal subunit, where it forms part of the central protuberance. The sequence is that of Large ribosomal subunit protein uL18 from Rickettsia rickettsii (strain Iowa).